The sequence spans 197 residues: ATP-dependent Clp protease proteolytic subunit (197 aa).

Ser-102 serves as the catalytic Nucleophile. His-127 is an active-site residue.

Belongs to the peptidase S14 family. As to quaternary structure, fourteen ClpP subunits assemble into 2 heptameric rings which stack back to back to give a disk-like structure with a central cavity, resembling the structure of eukaryotic proteasomes.

The protein resides in the cytoplasm. It catalyses the reaction Hydrolysis of proteins to small peptides in the presence of ATP and magnesium. alpha-casein is the usual test substrate. In the absence of ATP, only oligopeptides shorter than five residues are hydrolyzed (such as succinyl-Leu-Tyr-|-NHMec, and Leu-Tyr-Leu-|-Tyr-Trp, in which cleavage of the -Tyr-|-Leu- and -Tyr-|-Trp bonds also occurs).. Functionally, cleaves peptides in various proteins in a process that requires ATP hydrolysis. Has a chymotrypsin-like activity. Plays a major role in the degradation of misfolded proteins. This chain is ATP-dependent Clp protease proteolytic subunit, found in Borreliella afzelii (strain PKo) (Borrelia afzelii).